A 453-amino-acid chain; its full sequence is Histidine--tRNA ligase (453 aa).

The protein belongs to the class-II aminoacyl-tRNA synthetase family. Homodimer.

The protein resides in the cytoplasm. The catalysed reaction is tRNA(His) + L-histidine + ATP = L-histidyl-tRNA(His) + AMP + diphosphate + H(+). The protein is Histidine--tRNA ligase of Cytophaga hutchinsonii (strain ATCC 33406 / DSM 1761 / CIP 103989 / NBRC 15051 / NCIMB 9469 / D465).